A 136-amino-acid chain; its full sequence is Aspartate 1-decarboxylase (136 aa).

The active-site Schiff-base intermediate with substrate; via pyruvic acid is S25. S25 carries the pyruvic acid (Ser) modification. A substrate-binding site is contributed by T57. The Proton donor role is filled by Y58. Residue 73–75 (GAA) participates in substrate binding.

It belongs to the PanD family. In terms of assembly, heterooctamer of four alpha and four beta subunits. Requires pyruvate as cofactor. Is synthesized initially as an inactive proenzyme, which is activated by self-cleavage at a specific serine bond to produce a beta-subunit with a hydroxyl group at its C-terminus and an alpha-subunit with a pyruvoyl group at its N-terminus.

The protein localises to the cytoplasm. It catalyses the reaction L-aspartate + H(+) = beta-alanine + CO2. The protein operates within cofactor biosynthesis; (R)-pantothenate biosynthesis; beta-alanine from L-aspartate: step 1/1. Its function is as follows. Catalyzes the pyruvoyl-dependent decarboxylation of aspartate to produce beta-alanine. This chain is Aspartate 1-decarboxylase, found in Corynebacterium glutamicum (strain R).